A 97-amino-acid polypeptide reads, in one-letter code: MKRICSIYRSKKKDGMYLYVLKSDALERVPEPLMEAFGKAHHAFDMVLTPERKLSREDIAVVLENLDKQGYHLQMPPAEDEYIEHLPEELLRRNDPM.

Residues 3–87 form the YcgL domain; sequence RICSIYRSKK…AEDEYIEHLP (85 aa).

The chain is YcgL domain-containing protein PFLU_1517 from Pseudomonas fluorescens (strain SBW25).